Reading from the N-terminus, the 197-residue chain is Large ribosomal subunit protein uL10 (197 aa).

The interval 163-197 (GAPAAAEAPAAEESADSAAEAAAEAPAEAPAAEEN) is disordered.

The protein belongs to the universal ribosomal protein uL10 family. Part of the ribosomal stalk of the 50S ribosomal subunit. The N-terminus interacts with L11 and the large rRNA to form the base of the stalk. The C-terminus forms an elongated spine to which L12 dimers bind in a sequential fashion forming a multimeric L10(L12)X complex.

Functionally, forms part of the ribosomal stalk, playing a central role in the interaction of the ribosome with GTP-bound translation factors. The polypeptide is Large ribosomal subunit protein uL10 (Pseudarthrobacter chlorophenolicus (strain ATCC 700700 / DSM 12829 / CIP 107037 / JCM 12360 / KCTC 9906 / NCIMB 13794 / A6) (Arthrobacter chlorophenolicus)).